We begin with the raw amino-acid sequence, 222 residues long: MRTWTDVIGSEKEQDYFKATLATVRSEREAGKVIYPPATEVFNAFKLTELDQVKVVILGQDPYHGPNQAHGLCFSVLPGVRTPPSLVNIYKEMQRDLPDFVTPNHGFLESWAQQGVLLLNTVLTVQAGMAHSHAHLGWETFTDRVIEQINASCQGVVFLLWGAHAQKKGRFIDRSRHHVLSAPHPSPLSAHRGFIGCGHFSETNRLLSQQGMSPINWHSVCG.

Asp61 (proton acceptor) is an active-site residue.

This sequence belongs to the uracil-DNA glycosylase (UDG) superfamily. UNG family.

The protein localises to the cytoplasm. It catalyses the reaction Hydrolyzes single-stranded DNA or mismatched double-stranded DNA and polynucleotides, releasing free uracil.. Its function is as follows. Excises uracil residues from the DNA which can arise as a result of misincorporation of dUMP residues by DNA polymerase or due to deamination of cytosine. The sequence is that of Uracil-DNA glycosylase from Aeromonas salmonicida (strain A449).